Here is a 433-residue protein sequence, read N- to C-terminus: Transcobalamin-1 (433 aa).

The N-terminal stretch at 1 to 23 (MRQSHQLPLVGLLLFSFIPSQLC) is a signal peptide. Positions 24-310 (EICEVSEENY…DINKDSSCVS (287 aa)) are globular N-terminal alpha domain. 3 disulfide bridges follow: cysteine 26–cysteine 265, cysteine 105–cysteine 308, and cysteine 155–cysteine 197. Position 142–146 (142–146 (TNYYQ)) interacts with cyanocob(III)alamin. An N-linked (GlcNAc...) asparagine glycan is attached at asparagine 160. A cyanocob(III)alamin-binding site is contributed by aspartate 186. Asparagine 216 is a glycosylation site (N-linked (GlcNAc...) asparagine). Cyanocob(III)alamin-binding residues include asparagine 240 and glutamine 289. Residues 311–332 (ASGNFNISADEPITVTPPDSQS) form a flexible linker region. N-linked (GlcNAc...) asparagine glycans are attached at residues asparagine 316, asparagine 337, asparagine 343, asparagine 349, asparagine 354, and asparagine 369. The interval 333–433 (YISVNYSVRI…ENLEVRWSKY (101 aa)) is globular C-terminal beta domain. 385–386 (YI) provides a ligand contact to cyanocob(III)alamin. A disulfide bridge connects residues cysteine 388 and cysteine 393. Residues 402–404 (WEL), leucine 411, and tyrosine 433 each bind cyanocob(III)alamin.

It belongs to the eukaryotic cobalamin transport proteins family. Post-translationally, contains about 30% carbohydrates. In terms of tissue distribution, produced by the salivary glands of the oral cavity, in response to ingestion of food. Major constituent of secondary granules in neutrophils.

The protein resides in the secreted. Functionally, binds vitamin B12 with femtomolar affinity and protects it from the acidic environment of the stomach. The protein is Transcobalamin-1 (TCN1) of Homo sapiens (Human).